The chain runs to 610 residues: Isocitrate dehydrogenase kinase/phosphatase (610 aa).

Residues 359–365 (APGFKGT) and K380 contribute to the ATP site. Residue D419 is part of the active site.

This sequence belongs to the AceK family.

The protein resides in the cytoplasm. The catalysed reaction is L-seryl-[isocitrate dehydrogenase] + ATP = O-phospho-L-seryl-[isocitrate dehydrogenase] + ADP + H(+). In terms of biological role, bifunctional enzyme which can phosphorylate or dephosphorylate isocitrate dehydrogenase (IDH) on a specific serine residue. This is a regulatory mechanism which enables bacteria to bypass the Krebs cycle via the glyoxylate shunt in response to the source of carbon. When bacteria are grown on glucose, IDH is fully active and unphosphorylated, but when grown on acetate or ethanol, the activity of IDH declines drastically concomitant with its phosphorylation. The sequence is that of Isocitrate dehydrogenase kinase/phosphatase from Rhodopseudomonas palustris (strain ATCC BAA-98 / CGA009).